Consider the following 205-residue polypeptide: Outer-membrane lipoprotein carrier protein (205 aa).

Positions 1-19 (MKKIIICFIFVFSINVSFA) are cleaved as a signal peptide.

The protein belongs to the LolA family. In terms of assembly, monomer.

It is found in the periplasm. Participates in the translocation of lipoproteins from the inner membrane to the outer membrane. Only forms a complex with a lipoprotein if the residue after the N-terminal Cys is not an aspartate (The Asp acts as a targeting signal to indicate that the lipoprotein should stay in the inner membrane). The chain is Outer-membrane lipoprotein carrier protein from Francisella tularensis subsp. holarctica (strain LVS).